Reading from the N-terminus, the 106-residue chain is Large ribosomal subunit protein eL42 (106 aa).

It belongs to the eukaryotic ribosomal protein eL42 family.

The protein resides in the cytoplasm. The sequence is that of Large ribosomal subunit protein eL42 (RPL44) from Trypanosoma brucei brucei.